The chain runs to 225 residues: 7-cyano-7-deazaguanine synthase (225 aa).

An ATP-binding site is contributed by 9–19 (LSGGLDSATCL). The Zn(2+) site is built by Cys189, Cys199, Cys202, and Cys205.

The protein belongs to the QueC family. Zn(2+) is required as a cofactor.

The catalysed reaction is 7-carboxy-7-deazaguanine + NH4(+) + ATP = 7-cyano-7-deazaguanine + ADP + phosphate + H2O + H(+). Its pathway is purine metabolism; 7-cyano-7-deazaguanine biosynthesis. Its function is as follows. Catalyzes the ATP-dependent conversion of 7-carboxy-7-deazaguanine (CDG) to 7-cyano-7-deazaguanine (preQ(0)). This is 7-cyano-7-deazaguanine synthase from Dechloromonas aromatica (strain RCB).